Consider the following 177-residue polypeptide: Adenine phosphoribosyltransferase (177 aa).

It belongs to the purine/pyrimidine phosphoribosyltransferase family. In terms of assembly, homodimer.

The protein localises to the cytoplasm. The enzyme catalyses AMP + diphosphate = 5-phospho-alpha-D-ribose 1-diphosphate + adenine. It participates in purine metabolism; AMP biosynthesis via salvage pathway; AMP from adenine: step 1/1. Its function is as follows. Catalyzes a salvage reaction resulting in the formation of AMP, that is energically less costly than de novo synthesis. The polypeptide is Adenine phosphoribosyltransferase (Chlorobium phaeovibrioides (strain DSM 265 / 1930) (Prosthecochloris vibrioformis (strain DSM 265))).